The primary structure comprises 245 residues: Nucleoprotein (245 aa).

RNA is bound by residues Tyr-30, Lys-67, Arg-106, Arg-186, and Ser-196.

It belongs to the phlebovirus nucleocapsid protein family. In terms of assembly, homodimer. Homohexamer; ring-shaped, necessary to form the nucleocapsid. Homopentamers; opened pentamers in solution. Binds to viral genomic RNA. Interacts with glycoprotein Gn; this interaction allows packaging of nucleocapsids into virions.

The protein resides in the virion. It localises to the host cytoplasm. Its subcellular location is the host nucleus. The protein localises to the host endoplasmic reticulum-Golgi intermediate compartment. It is found in the host Golgi apparatus. Functionally, encapsidates the genomic RNA, protecting it from nucleases. Displays high affinity for single-stranded nucleic acid. The encapsidated genomic RNA is termed the nucleocapsid (NC) or ribonucleoprotein. The ribonucleoprotein has a non-helical structure. Serves as template for viral transcription and replication. After replication, the nucleocapsid is recruited to the host Golgi apparatus by glycoprotein Gn for packaging into virus particles. The sequence is that of Nucleoprotein (NP) from Dabie bandavirus (Severe fever with thrombocytopenia virus).